Here is a 400-residue protein sequence, read N- to C-terminus: Clotting factor B (400 aa).

The first 23 residues, 1-23 (MTWICVITLFALASATLGNKVSR), serve as a signal peptide directing secretion. Residues 36–80 (ECTARGGLKGSCKSLIDCPSVLATLKDSFPVVCSWNGRFQPIVCC) form the Clip domain. Disulfide bonds link cysteine 37-cysteine 79, cysteine 47-cysteine 68, and cysteine 53-cysteine 80. The propeptide at 104 to 124 (LPRLHISGCGKRKVKIDITTV) is activation peptide. N-linked (GlcNAc...) asparagine glycosylation occurs at asparagine 140. One can recognise a Peptidase S1 domain in the interval 148–392 (IAGGVEAKIG…YLDWIAKVTN (245 aa)). Residues histidine 192 and aspartate 240 each act as charge relay system in the active site. Residue asparagine 251 is glycosylated (N-linked (GlcNAc...) asparagine). Intrachain disulfides connect cysteine 307–cysteine 329 and cysteine 340–cysteine 368. Serine 344 serves as the catalytic Charge relay system. Asparagine 352 carries N-linked (GlcNAc...) asparagine glycosylation.

Belongs to the peptidase S1 family. CLIP subfamily. In terms of assembly, upon activation by factor C, it is converted to a two-chain active form composed of a light and a heavy chain linked by a disulfide bond.

It is found in the secreted. It carries out the reaction Selective cleavage of 98-Arg-|-Ile-99 bond in Limulus proclotting enzyme to form active clotting enzyme.. With respect to regulation, strongly inhibited by alpha2-plasmin inhibitor and DFP. Partially inhibited by benzamidine, leupeptin and PCMB. Functionally, this enzyme is closely associated with an endotoxin-sensitive hemolymph coagulation system which may play important roles in both hemostasis and host defense mechanisms. Its active form catalyzes the activation of proclotting enzyme. Does not activate the mammalian coagulation factors factor IX, factor X, prothrombin, plasminogen, protein C or prekallikrein. Does not hydrolyze fibrinogen. Does not catalyze the activation of factor C or coagulogen. The chain is Clotting factor B from Tachypleus tridentatus (Japanese horseshoe crab).